Consider the following 278-residue polypeptide: HTH-type transcriptional regulator ExsA (278 aa).

Positions 171–269 (ERLQLFMEKH…GCTPSRSRQG (99 aa)) constitute an HTH araC/xylS-type domain. 2 consecutive DNA-binding regions (H-T-H motif) follow at residues 188–209 (SDFS…GSVY) and 236–259 (IVDI…RRRF).

Homodimer. Interacts with ExsD; this interaction inhibits ExsA activity.

With respect to regulation, in the absence of inducing signals such as low Ca(2+) or host cell contact, the T3SS/injectisome is expressed at a low basal level and exists in a quiescent state due to ExsA sequestration by ExsD in a 1:1 complex. Upon host cell contact, this interaction is disrupted by the anti-antiactivator protein ExsC leading to ExsA activation. Its function is as follows. Transcriptional regulator that plays an essential role in the activation the type III secretion system (T3SS) operons. In addition, ExsA directly regulates the transcription of ImpA virulence factor that cooperatively inhibits the functions of host macrophages together with the T3SS. In Pseudomonas aeruginosa (strain ATCC 15692 / DSM 22644 / CIP 104116 / JCM 14847 / LMG 12228 / 1C / PRS 101 / PAO1), this protein is HTH-type transcriptional regulator ExsA (exsA).